Consider the following 204-residue polypeptide: MQRASRLKKELHMLAIEPPPGITCWQEKDQVADLRAQILGGANTPYEKGVFTLEVIIPERYPFEPPQVRFLTPIYHPNIDSSGRICLDILKLPPKGAWRPSLNIATVLTSIQLLMAEPNPDDPLMADISSEFKYNKIAFLKKAKQWTEAHARQKQKADEEELGTSSEVGDSEESHSTQKRKARPLGGMEKKFSPDVQRVYPGPS.

The 151-residue stretch at 2–152 (QRASRLKKEL…AKQWTEAHAR (151 aa)) folds into the UBC core domain. The active-site Glycyl thioester intermediate is cysteine 86. Glycyl lysine isopeptide (Lys-Gly) (interchain with G-Cter in ubiquitin) cross-links involve residues lysine 91 and lysine 181. The interval 150–204 (HARQKQKADEEELGTSSEVGDSEESHSTQKRKARPLGGMEKKFSPDVQRVYPGPS) is disordered. Glycyl lysine isopeptide (Lys-Gly) (interchain with G-Cter in SUMO2) cross-links involve residues lysine 190 and lysine 191. A Phosphoserine modification is found at serine 193.

Belongs to the ubiquitin-conjugating enzyme family. As to quaternary structure, interacts with FANCL and BRCA1. Post-translationally, auto-ubiquitinated. Effects of auto-monoubiquitination at Lys-91 and Lys-181 are unclear.

The protein resides in the nucleus. The enzyme catalyses S-ubiquitinyl-[E1 ubiquitin-activating enzyme]-L-cysteine + [E2 ubiquitin-conjugating enzyme]-L-cysteine = [E1 ubiquitin-activating enzyme]-L-cysteine + S-ubiquitinyl-[E2 ubiquitin-conjugating enzyme]-L-cysteine.. It participates in protein modification; protein ubiquitination. Accepts ubiquitin from the E1 complex and catalyzes its covalent attachment to other proteins. Catalyzes monoubiquitination. Involved in mitomycin-C (MMC)-induced DNA repair: acts as a specific E2 ubiquitin-conjugating enzyme for the Fanconi anemia complex by associating with E3 ubiquitin-protein ligase FANCL and catalyzing monoubiquitination of FANCD2, a key step in the DNA damage pathway. Also mediates monoubiquitination of FANCL and FANCI. May contribute to ubiquitination and degradation of BRCA1. In vitro able to promote polyubiquitination using all 7 ubiquitin Lys residues, but may prefer 'Lys-11'-, 'Lys-27'-, 'Lys-48'- and 'Lys-63'-linked polyubiquitination. This is Ubiquitin-conjugating enzyme E2 T (Ube2t) from Mus musculus (Mouse).